The sequence spans 146 residues: Large ribosomal subunit protein uL15 (146 aa).

A compositionally biased stretch (basic and acidic residues) spans 1–13 (MKLHELYPAEGSR). The disordered stretch occupies residues 1–55 (MKLHELYPAEGSRKVRNRVGRGAATGNGKTSGRGQKGQKARSGGKVRPGFEGGQL). Residues 23 to 35 (AATGNGKTSGRGQ) are compositionally biased toward gly residues.

The protein belongs to the universal ribosomal protein uL15 family. Part of the 50S ribosomal subunit.

In terms of biological role, binds to the 23S rRNA. This chain is Large ribosomal subunit protein uL15, found in Staphylococcus carnosus (strain TM300).